The sequence spans 79 residues: uncharacterized protein (79 aa).

This is an uncharacterized protein from Dryophytes versicolor (chameleon treefrog).